Reading from the N-terminus, the 347-residue chain is KIN17-like protein KLP (347 aa).

Residues Lys222–Arg225 carry the Nuclear localization signal (NLS) motif.

Belongs to the KIN17 family.

It is found in the cytoplasm. It localises to the nucleus. Its function is as follows. May act as repressor of root growth during copper excess and of hypocotyl growth in the dark. This chain is KIN17-like protein KLP, found in Arabidopsis thaliana (Mouse-ear cress).